Consider the following 101-residue polypeptide: Small ribosomal subunit protein uS14 (101 aa).

This sequence belongs to the universal ribosomal protein uS14 family. In terms of assembly, part of the 30S ribosomal subunit. Contacts proteins S3 and S10.

Functionally, binds 16S rRNA, required for the assembly of 30S particles and may also be responsible for determining the conformation of the 16S rRNA at the A site. This Idiomarina loihiensis (strain ATCC BAA-735 / DSM 15497 / L2-TR) protein is Small ribosomal subunit protein uS14.